A 185-amino-acid polypeptide reads, in one-letter code: Putative manganese efflux pump MntP (185 aa).

The next 6 membrane-spanning stretches (helical) occupy residues 6–26 (IFIISVALAMDAFTIAVACGL), 41–61 (FHFGLFQALMPLLGWLAGLTV), 65–85 (VETYAPWISFFLLAFVGGKMI), 107–127 (LVFLSVATSLDALAVGLSFSI), 132–152 (IAFPCVMIGITALVLTSFGLW), and 164–184 (SHIAERIGGVVLILIGLKLLL).

The protein belongs to the MntP (TC 9.B.29) family.

It localises to the cell inner membrane. Its function is as follows. Probably functions as a manganese efflux pump. This is Putative manganese efflux pump MntP from Maridesulfovibrio salexigens (strain ATCC 14822 / DSM 2638 / NCIMB 8403 / VKM B-1763) (Desulfovibrio salexigens).